Here is a 297-residue protein sequence, read N- to C-terminus: Ubiquinone biosynthesis protein COQ4, mitochondrial (297 aa).

Residues 1–54 (MLSSARARLPISLCSFSLPFARLPNTLSRYQETWQRLPGRTHPTRSIRTTPAYE) constitute a mitochondrion transit peptide. Residues His-178, Asp-179, His-182, and Glu-194 each contribute to the Zn(2+) site.

This sequence belongs to the COQ4 family. As to quaternary structure, component of a multi-subunit COQ enzyme complex, composed of at least COQ3, COQ4, COQ5, COQ6, COQ7 and COQ9. The cofactor is Zn(2+).

The protein localises to the mitochondrion inner membrane. It carries out the reaction a 4-hydroxy-3-methoxy-5-(all-trans-polyprenyl)benzoate + H(+) = a 2-methoxy-6-(all-trans-polyprenyl)phenol + CO2. It functions in the pathway cofactor biosynthesis; ubiquinone biosynthesis. Functionally, lyase that catalyzes the C1-decarboxylation of 4-hydroxy-3-methoxy-5-(all-trans-polyprenyl)benzoic acid into 2-methoxy-6-(all-trans-polyprenyl)phenol during ubiquinone biosynthesis. This Laccaria bicolor (strain S238N-H82 / ATCC MYA-4686) (Bicoloured deceiver) protein is Ubiquinone biosynthesis protein COQ4, mitochondrial.